Here is a 339-residue protein sequence, read N- to C-terminus: NADH-quinone oxidoreductase subunit H (339 aa).

The next 9 membrane-spanning stretches (helical) occupy residues 10 to 30 (FPLT…ILCV), 50 to 70 (PNVV…KLLF), 82 to 102 (ILFI…WAVI), 115 to 135 (VGVL…IIAG), 161 to 181 (MGLV…SGII), 187 to 207 (LPWW…ISVL), 235 to 255 (MGFA…SAMT), 275 to 295 (IPGF…FLWI), and 311 to 331 (GWKV…SVLF).

It belongs to the complex I subunit 1 family. As to quaternary structure, NDH-1 is composed of 14 different subunits. Subunits NuoA, H, J, K, L, M, N constitute the membrane sector of the complex.

The protein resides in the cell inner membrane. The enzyme catalyses a quinone + NADH + 5 H(+)(in) = a quinol + NAD(+) + 4 H(+)(out). Functionally, NDH-1 shuttles electrons from NADH, via FMN and iron-sulfur (Fe-S) centers, to quinones in the respiratory chain. The immediate electron acceptor for the enzyme in this species is believed to be ubiquinone. Couples the redox reaction to proton translocation (for every two electrons transferred, four hydrogen ions are translocated across the cytoplasmic membrane), and thus conserves the redox energy in a proton gradient. This subunit may bind ubiquinone. This Rickettsia prowazekii (strain Madrid E) protein is NADH-quinone oxidoreductase subunit H.